The primary structure comprises 119 residues: MSINKNIARLRRAKSTRAHIRELGVARLSVLRTGQHLYAQVFTADGSKVIAAANTLQADVKDGLKNGKNSDAAVKVGKLIAERAKAAGIEKVAFDRSGYRYHGRIKALADAAREGGLQF.

Belongs to the universal ribosomal protein uL18 family. Part of the 50S ribosomal subunit; part of the 5S rRNA/L5/L18/L25 subcomplex. Contacts the 5S and 23S rRNAs.

Functionally, this is one of the proteins that bind and probably mediate the attachment of the 5S RNA into the large ribosomal subunit, where it forms part of the central protuberance. In Xanthomonas campestris pv. campestris (strain 8004), this protein is Large ribosomal subunit protein uL18.